Here is a 376-residue protein sequence, read N- to C-terminus: Alcohol dehydrogenase 1 (376 aa).

The residue at position 2 (S2) is an N-acetylserine. Residues C47, H68, C98, C101, C104, C112, and C176 each contribute to the Zn(2+) site. NAD(+) is bound by residues 201–206 (GLGGVG), D225, and K230. Position 235 is an N6-succinyllysine (K235). An NAD(+)-binding site is contributed by 294–296 (VGV). Position 341 is an N6-succinyllysine (K341). An NAD(+)-binding site is contributed by R371.

Belongs to the zinc-containing alcohol dehydrogenase family. Class-I subfamily. Dimer of identical or non-identical chains of three types (A, B, C), which are coded by 3 separate genes at different loci. It depends on Zn(2+) as a cofactor.

The protein resides in the cytoplasm. It catalyses the reaction a primary alcohol + NAD(+) = an aldehyde + NADH + H(+). The enzyme catalyses a secondary alcohol + NAD(+) = a ketone + NADH + H(+). The sequence is that of Alcohol dehydrogenase 1 (Adh1) from Rattus norvegicus (Rat).